We begin with the raw amino-acid sequence, 401 residues long: Rho-N domain-containing protein 1, chloroplastic (401 aa).

The N-terminal 63 residues, 1-63 (MAMSGTFHLT…VPNRSSFVCR (63 aa)), are a transit peptide targeting the chloroplast. Disordered stretches follow at residues 73–129 (PDFS…PGPR) and 180–361 (KHSG…EEAV). 3 stretches are compositionally biased toward polar residues: residues 102–126 (DMLSSRNGPLFNLSSSPKFQATSSP), 210–223 (TGNLVTSGNKDNNA), and 240–265 (PRSQSPPAYSSEATFDQSSSYSVTWT). Over residues 266-290 (QKKDTVELHDEPEHEPAYEHEHEPE) the composition is skewed to basic and acidic residues. Residues 339–358 (LSDDDESLDDADEDSDEAEE) show a composition bias toward acidic residues. Residues 339-371 (LSDDDESLDDADEDSDEAEEEAVKDLSELKLVE) adopt a coiled-coil conformation.

Homodimer or homomultimer. Part of a chloroplastic degradosome-like complex. Interacts with RNE.

It localises to the plastid. The protein resides in the chloroplast. Its function is as follows. Binds to and supports processing of specific plastid RNAs. Associates via its C-terminal Rho-N domain to single stranded regions of 16S and 23S rRNAs or to rbcL mRNAs. May be involved in targeting transcripts to RNases such as RNE or RNase J. In Arabidopsis thaliana (Mouse-ear cress), this protein is Rho-N domain-containing protein 1, chloroplastic (RHON1).